The sequence spans 176 residues: Protein GrpE (176 aa).

Belongs to the GrpE family. As to quaternary structure, homodimer.

The protein resides in the cytoplasm. Functionally, participates actively in the response to hyperosmotic and heat shock by preventing the aggregation of stress-denatured proteins, in association with DnaK and GrpE. It is the nucleotide exchange factor for DnaK and may function as a thermosensor. Unfolded proteins bind initially to DnaJ; upon interaction with the DnaJ-bound protein, DnaK hydrolyzes its bound ATP, resulting in the formation of a stable complex. GrpE releases ADP from DnaK; ATP binding to DnaK triggers the release of the substrate protein, thus completing the reaction cycle. Several rounds of ATP-dependent interactions between DnaJ, DnaK and GrpE are required for fully efficient folding. The sequence is that of Protein GrpE from Rickettsia bellii (strain OSU 85-389).